Reading from the N-terminus, the 368-residue chain is 3-isopropylmalate dehydrogenase (368 aa).

80-93 (GPKWDNLEFSKKPE) is an NAD(+) binding site. Substrate-binding residues include Arg-100, Arg-110, Arg-138, and Asp-229. The Mg(2+) site is built by Asp-229, Asp-253, and Asp-257. Residue 292-304 (GSAPDIAGKEIAN) participates in NAD(+) binding.

Belongs to the isocitrate and isopropylmalate dehydrogenases family. LeuB type 1 subfamily. As to quaternary structure, homodimer. Requires Mg(2+) as cofactor. Mn(2+) serves as cofactor.

The protein resides in the cytoplasm. The enzyme catalyses (2R,3S)-3-isopropylmalate + NAD(+) = 4-methyl-2-oxopentanoate + CO2 + NADH. It participates in amino-acid biosynthesis; L-leucine biosynthesis; L-leucine from 3-methyl-2-oxobutanoate: step 3/4. In terms of biological role, catalyzes the oxidation of 3-carboxy-2-hydroxy-4-methylpentanoate (3-isopropylmalate) to 3-carboxy-4-methyl-2-oxopentanoate. The product decarboxylates to 4-methyl-2 oxopentanoate. The polypeptide is 3-isopropylmalate dehydrogenase (Pelagibacter ubique (strain HTCC1062)).